A 305-amino-acid chain; its full sequence is Oxygen-dependent coproporphyrinogen-III oxidase (305 aa).

Ser-94 is a substrate binding site. Positions 98 and 108 each coordinate a divalent metal cation. Catalysis depends on His-108, which acts as the Proton donor. Substrate is bound at residue Asn-110–Arg-112. His-147 and His-177 together coordinate a divalent metal cation. The segment at Tyr-242–Glu-277 is important for dimerization. Gly-260–Arg-262 contributes to the substrate binding site.

Belongs to the aerobic coproporphyrinogen-III oxidase family. As to quaternary structure, homodimer. Requires a divalent metal cation as cofactor.

It is found in the cytoplasm. It catalyses the reaction coproporphyrinogen III + O2 + 2 H(+) = protoporphyrinogen IX + 2 CO2 + 2 H2O. Its pathway is porphyrin-containing compound metabolism; protoporphyrin-IX biosynthesis; protoporphyrinogen-IX from coproporphyrinogen-III (O2 route): step 1/1. Involved in the heme biosynthesis. Catalyzes the aerobic oxidative decarboxylation of propionate groups of rings A and B of coproporphyrinogen-III to yield the vinyl groups in protoporphyrinogen-IX. This is Oxygen-dependent coproporphyrinogen-III oxidase from Shewanella denitrificans (strain OS217 / ATCC BAA-1090 / DSM 15013).